We begin with the raw amino-acid sequence, 506 residues long: CTL-like protein DDB_G0269978 (506 aa).

N-linked (GlcNAc...) asparagine glycans are attached at residues asparagine 15 and asparagine 41. Helical transmembrane passes span leucine 91–alanine 111, leucine 126–tryptophan 146, serine 161–tryptophan 181, tyrosine 182–phenylalanine 202, threonine 226–phenylalanine 246, serine 256–threonine 276, valine 279–alanine 299, phenylalanine 323–cysteine 343, glycine 345–phenylalanine 367, leucine 371–serine 393, isoleucine 416–isoleucine 436, and tryptophan 447–phenylalanine 467.

It belongs to the CTL (choline transporter-like) family.

It localises to the membrane. The protein is CTL-like protein DDB_G0269978 of Dictyostelium discoideum (Social amoeba).